We begin with the raw amino-acid sequence, 323 residues long: Non-structural protein 9 (323 aa).

Positions methionine 1–glycine 142 are disordered. Over residues isoleucine 33–aspartate 49 the composition is skewed to low complexity. Residues proline 99–glycine 115 show a composition bias toward polar residues.

It localises to the host cytoplasm. Its function is as follows. Constituent of viral factories. The sequence is that of Non-structural protein 9 from Rice gall dwarf virus (RGDV).